The primary structure comprises 82 residues: uncharacterized protein (82 aa).

Its function is as follows. Could be a silencing control element for the regulation of the restriction system. This is an uncharacterized protein from Herpetosiphon aurantiacus (Herpetosiphon giganteus).